A 291-amino-acid chain; its full sequence is Proline iminopeptidase (291 aa).

The AB hydrolase-1 domain occupies 30–274; the sequence is LLIHGGPGSS…ANSRHLALLD (245 aa). S103 serves as the catalytic Nucleophile. The active site involves D242. H269 acts as the Proton donor in catalysis.

It belongs to the peptidase S33 family.

It is found in the cell envelope. The enzyme catalyses Release of N-terminal proline from a peptide.. Its function is as follows. Releases the N-terminal proline from various substrates. The sequence is that of Proline iminopeptidase from Lacticaseibacillus rhamnosus (strain Lc 705) (Lactobacillus rhamnosus).